The primary structure comprises 326 residues: Phospho-N-acetylmuramoyl-pentapeptide-transferase (326 aa).

9 consecutive transmembrane segments (helical) span residues 3-23, 51-71, 79-99, 115-135, 138-158, 169-189, 195-215, 221-243, and 306-326; these read ISIS…PAFI, TMGG…FALF, VGMI…DDFL, LALQ…GGDI, VFGY…FWLV, GVDG…GVIA, MDIL…FIFN, VFMG…MALH, and FFFW…LYLM.

This sequence belongs to the glycosyltransferase 4 family. MraY subfamily. Mg(2+) serves as cofactor.

The protein localises to the cell membrane. The enzyme catalyses UDP-N-acetyl-alpha-D-muramoyl-L-alanyl-gamma-D-glutamyl-L-lysyl-D-alanyl-D-alanine + di-trans,octa-cis-undecaprenyl phosphate = Mur2Ac(oyl-L-Ala-gamma-D-Glu-L-Lys-D-Ala-D-Ala)-di-trans,octa-cis-undecaprenyl diphosphate + UMP. It participates in cell wall biogenesis; peptidoglycan biosynthesis. Its function is as follows. Catalyzes the initial step of the lipid cycle reactions in the biosynthesis of the cell wall peptidoglycan: transfers peptidoglycan precursor phospho-MurNAc-pentapeptide from UDP-MurNAc-pentapeptide onto the lipid carrier undecaprenyl phosphate, yielding undecaprenyl-pyrophosphoryl-MurNAc-pentapeptide, known as lipid I. This Streptococcus pneumoniae serotype 2 (strain D39 / NCTC 7466) protein is Phospho-N-acetylmuramoyl-pentapeptide-transferase.